The primary structure comprises 217 residues: ATP-dependent Clp protease proteolytic subunit (217 aa).

Residue serine 119 is the Nucleophile of the active site. The active site involves histidine 144.

It belongs to the peptidase S14 family. As to quaternary structure, fourteen ClpP subunits assemble into 2 heptameric rings which stack back to back to give a disk-like structure with a central cavity, resembling the structure of eukaryotic proteasomes.

It localises to the cytoplasm. It catalyses the reaction Hydrolysis of proteins to small peptides in the presence of ATP and magnesium. alpha-casein is the usual test substrate. In the absence of ATP, only oligopeptides shorter than five residues are hydrolyzed (such as succinyl-Leu-Tyr-|-NHMec, and Leu-Tyr-Leu-|-Tyr-Trp, in which cleavage of the -Tyr-|-Leu- and -Tyr-|-Trp bonds also occurs).. Cleaves peptides in various proteins in a process that requires ATP hydrolysis. Has a chymotrypsin-like activity. Plays a major role in the degradation of misfolded proteins. The polypeptide is ATP-dependent Clp protease proteolytic subunit (Bordetella petrii (strain ATCC BAA-461 / DSM 12804 / CCUG 43448)).